The sequence spans 94 residues: Integration host factor subunit beta (94 aa).

This sequence belongs to the bacterial histone-like protein family. Heterodimer of an alpha and a beta chain.

In terms of biological role, this protein is one of the two subunits of integration host factor, a specific DNA-binding protein that functions in genetic recombination as well as in transcriptional and translational control. This Pseudomonas paraeruginosa (strain DSM 24068 / PA7) (Pseudomonas aeruginosa (strain PA7)) protein is Integration host factor subunit beta.